Here is a 272-residue protein sequence, read N- to C-terminus: Tryptophan synthase alpha chain (272 aa).

Catalysis depends on proton acceptor residues glutamate 60 and aspartate 71.

This sequence belongs to the TrpA family. In terms of assembly, tetramer of two alpha and two beta chains.

The enzyme catalyses (1S,2R)-1-C-(indol-3-yl)glycerol 3-phosphate + L-serine = D-glyceraldehyde 3-phosphate + L-tryptophan + H2O. It participates in amino-acid biosynthesis; L-tryptophan biosynthesis; L-tryptophan from chorismate: step 5/5. Functionally, the alpha subunit is responsible for the aldol cleavage of indoleglycerol phosphate to indole and glyceraldehyde 3-phosphate. The polypeptide is Tryptophan synthase alpha chain (Methanosarcina acetivorans (strain ATCC 35395 / DSM 2834 / JCM 12185 / C2A)).